The chain runs to 262 residues: Hydroxyethylthiazole kinase (262 aa).

Methionine 50 provides a ligand contact to substrate. Residues arginine 125 and threonine 171 each coordinate ATP. Glycine 198 is a substrate binding site.

Belongs to the Thz kinase family. It depends on Mg(2+) as a cofactor.

It catalyses the reaction 5-(2-hydroxyethyl)-4-methylthiazole + ATP = 4-methyl-5-(2-phosphooxyethyl)-thiazole + ADP + H(+). The protein operates within cofactor biosynthesis; thiamine diphosphate biosynthesis; 4-methyl-5-(2-phosphoethyl)-thiazole from 5-(2-hydroxyethyl)-4-methylthiazole: step 1/1. Functionally, catalyzes the phosphorylation of the hydroxyl group of 4-methyl-5-beta-hydroxyethylthiazole (THZ). The protein is Hydroxyethylthiazole kinase of Escherichia coli (strain K12 / MC4100 / BW2952).